We begin with the raw amino-acid sequence, 153 residues long: Putative pre-16S rRNA nuclease (153 aa).

It belongs to the YqgF nuclease family.

It is found in the cytoplasm. In terms of biological role, could be a nuclease involved in processing of the 5'-end of pre-16S rRNA. The sequence is that of Putative pre-16S rRNA nuclease from Chloroflexus aurantiacus (strain ATCC 29366 / DSM 635 / J-10-fl).